The following is a 310-amino-acid chain: UDP-N-acetylenolpyruvoylglucosamine reductase (310 aa).

Positions T34 to E211 constitute an FAD-binding PCMH-type domain. R177 is a catalytic residue. S225 serves as the catalytic Proton donor. E295 is a catalytic residue.

Belongs to the MurB family. Requires FAD as cofactor.

The protein localises to the cytoplasm. It carries out the reaction UDP-N-acetyl-alpha-D-muramate + NADP(+) = UDP-N-acetyl-3-O-(1-carboxyvinyl)-alpha-D-glucosamine + NADPH + H(+). It functions in the pathway cell wall biogenesis; peptidoglycan biosynthesis. Cell wall formation. The sequence is that of UDP-N-acetylenolpyruvoylglucosamine reductase from Beijerinckia indica subsp. indica (strain ATCC 9039 / DSM 1715 / NCIMB 8712).